The primary structure comprises 695 residues: Elongation factor G (695 aa).

Positions 12–286 constitute a tr-type G domain; it reads DKLRNIGIMA…AVIDYLPSPL (275 aa). GTP-binding positions include 21 to 28, 85 to 89, and 139 to 142; these read AHIDAGKT, DTPGH, and NKMD.

This sequence belongs to the TRAFAC class translation factor GTPase superfamily. Classic translation factor GTPase family. EF-G/EF-2 subfamily.

It localises to the cytoplasm. In terms of biological role, catalyzes the GTP-dependent ribosomal translocation step during translation elongation. During this step, the ribosome changes from the pre-translocational (PRE) to the post-translocational (POST) state as the newly formed A-site-bound peptidyl-tRNA and P-site-bound deacylated tRNA move to the P and E sites, respectively. Catalyzes the coordinated movement of the two tRNA molecules, the mRNA and conformational changes in the ribosome. This Thermotoga sp. (strain RQ2) protein is Elongation factor G.